The primary structure comprises 486 residues: Glutamyl-tRNA(Gln) amidotransferase subunit A (486 aa).

Active-site charge relay system residues include lysine 77 and serine 152. The active-site Acyl-ester intermediate is serine 176.

The protein belongs to the amidase family. GatA subfamily. In terms of assembly, heterotrimer of A, B and C subunits.

The enzyme catalyses L-glutamyl-tRNA(Gln) + L-glutamine + ATP + H2O = L-glutaminyl-tRNA(Gln) + L-glutamate + ADP + phosphate + H(+). In terms of biological role, allows the formation of correctly charged Gln-tRNA(Gln) through the transamidation of misacylated Glu-tRNA(Gln) in organisms which lack glutaminyl-tRNA synthetase. The reaction takes place in the presence of glutamine and ATP through an activated gamma-phospho-Glu-tRNA(Gln). The polypeptide is Glutamyl-tRNA(Gln) amidotransferase subunit A (Pediococcus pentosaceus (strain ATCC 25745 / CCUG 21536 / LMG 10740 / 183-1w)).